Here is a 119-residue protein sequence, read N- to C-terminus: Small ribosomal subunit protein bS6 (119 aa).

The protein belongs to the bacterial ribosomal protein bS6 family.

Its function is as follows. Binds together with bS18 to 16S ribosomal RNA. This Thermosipho africanus (strain TCF52B) protein is Small ribosomal subunit protein bS6.